The primary structure comprises 164 residues: Arginine repressor (164 aa).

It belongs to the ArgR family.

It localises to the cytoplasm. The protein operates within amino-acid biosynthesis; L-arginine biosynthesis [regulation]. Its function is as follows. Regulates arginine biosynthesis genes. In Mycolicibacterium paratuberculosis (strain ATCC BAA-968 / K-10) (Mycobacterium paratuberculosis), this protein is Arginine repressor.